Reading from the N-terminus, the 402-residue chain is Putative neuropeptide Y receptor 11 (402 aa).

The Extracellular portion of the chain corresponds to 1–45 (MGSVNESCDNYVEIFNKINYFFRDDQVINGTEYSPKEFGYFITFA). Residues Asn5 and Asn29 are each glycosylated (N-linked (GlcNAc...) asparagine). The helical transmembrane segment at 46–66 (YMLIILFGAIGNFLTIIVVIL) threads the bilayer. Topologically, residues 67 to 85 (NPAMRTTRNFFILNLALSD) are cytoplasmic. Residues 86-106 (FFVCIVTAPTTLYTVLYMFWP) traverse the membrane as a helical segment. Over 107–122 (FSRTLCKIAGSLQGFN) the chain is Extracellular. Cys112 and Cys194 are oxidised to a cystine. A helical transmembrane segment spans residues 123-143 (IFLSTFSIASIAVDRYVLIIF). The Cytoplasmic portion of the chain corresponds to 144–152 (PTKRERQQN). A helical transmembrane segment spans residues 153–173 (LSFCFFIMIWVISLILAVPLL). The Extracellular segment spans residues 174-210 (QASDLTPVFVEPSCDLALYICHEQNEIWEKMIISKGT). A helical membrane pass occupies residues 211–231 (YTLAVLITQYAFPLFSLVFAY). Residues 232–272 (SRIAHRMKLRFANRNQNVTTNTNTSQRRRSVVERQRRTHLL) are Cytoplasmic-facing. A helical membrane pass occupies residues 273–293 (LVCVVAVFAVAWLPLNVFHIF). The Extracellular portion of the chain corresponds to 294–306 (NTFELVNSFSVTT). The chain crosses the membrane as a helical span at residues 307–328 (FSICHCLAMCSACLNPLIYAFF). At 329–402 (NHNFRIEFMH…LSAMEQDEQL (74 aa)) the chain is on the cytoplasmic side.

Belongs to the G-protein coupled receptor 1 family.

The protein resides in the cell membrane. Functionally, could be a receptor for neuropeptide Y and peptide YY. The sequence is that of Putative neuropeptide Y receptor 11 (npr-11) from Caenorhabditis elegans.